Consider the following 453-residue polypeptide: Beta-agarase AgaB34 (453 aa).

The first 23 residues, 1–23 (MKGFTKHSILMACSIGLAINATA), serve as a signal peptide directing secretion. A GH16 domain is found at 24-301 (ADWDNIPIPA…WIRVYKPTGG (278 aa)). The active-site Nucleophile is the glutamate 147. Glutamate 152 serves as the catalytic Proton donor. One can recognise a Ricin B-type lectin domain in the interval 313–453 (PSGYTNLQLA…GATNQRFKFL (141 aa)). Cystine bridges form between cysteine 327–cysteine 346, cysteine 375–cysteine 394, and cysteine 423–cysteine 442.

It belongs to the glycosyl hydrolase 16 family.

The protein localises to the secreted. It catalyses the reaction Hydrolysis of (1-&gt;4)-beta-D-galactosidic linkages in agarose, giving the tetramer as the predominant product.. This is Beta-agarase AgaB34 from Agarivorans albus.